We begin with the raw amino-acid sequence, 378 residues long: Alanine racemase (378 aa).

Catalysis depends on Lys-35, which acts as the Proton acceptor; specific for D-alanine. Residue Lys-35 is modified to N6-(pyridoxal phosphate)lysine. Arg-133 contributes to the substrate binding site. The active-site Proton acceptor; specific for L-alanine is Tyr-266. Met-314 provides a ligand contact to substrate.

This sequence belongs to the alanine racemase family. The cofactor is pyridoxal 5'-phosphate.

The enzyme catalyses L-alanine = D-alanine. The protein operates within amino-acid biosynthesis; D-alanine biosynthesis; D-alanine from L-alanine: step 1/1. Catalyzes the interconversion of L-alanine and D-alanine. May also act on other amino acids. The protein is Alanine racemase (alr) of Beutenbergia cavernae (strain ATCC BAA-8 / DSM 12333 / CCUG 43141 / JCM 11478 / NBRC 16432 / NCIMB 13614 / HKI 0122).